The primary structure comprises 907 residues: Catenin alpha-1 (907 aa).

Thr-2 is subject to N-acetylthreonine. Positions 2–228 are involved in homodimerization; it reads TAVHAGNINF…PILYTASQAC (227 aa). Lys-57 is covalently cross-linked (Glycyl lysine isopeptide (Lys-Gly) (interchain with G-Cter in SUMO2)). The tract at residues 97-148 is interaction with JUP and CTNNB1; that stretch reads VRKQGDLMKSAAGEFADDPCSSVKRGNMVRAARALLSAVTRLLILADMADVY. Phosphoserine occurs at positions 264, 268, 296, and 298. An interaction with alpha-actinin region spans residues 326 to 395; the sequence is TRDDRRERIV…AVMDHVSDSF (70 aa). Thr-635 bears the Phosphothreonine mark. Ser-642 carries the post-translational modification Phosphoserine. Thr-646 is subject to Phosphothreonine. Residues Ser-653 and Ser-656 each carry the phosphoserine modification. Thr-659 carries the post-translational modification Phosphothreonine. Residue Lys-798 forms a Glycyl lysine isopeptide (Lys-Gly) (interchain with G-Cter in SUMO2) linkage. Ser-852 is modified (phosphoserine). Positions 865–881 are enriched in basic and acidic residues; that stretch reads PEKKPLVKREKQDETQT. The disordered stretch occupies residues 865–895; that stretch reads PEKKPLVKREKQDETQTKIKRASQKKHVNPV. A compositionally biased stretch (basic residues) spans 882–892; that stretch reads KIKRASQKKHV.

It belongs to the vinculin/alpha-catenin family. Monomer and homodimer; the monomer preferentially binds to CTNNB1 and the homodimer to actin. Component of an cadherin:catenin adhesion complex composed of at least of CDH26, beta-catenin/CTNNB1, alpha-catenin/CTNNA1 and p120 catenin/CTNND1. Possible component of an E-cadherin/ catenin adhesion complex together with E-cadherin/CDH1 and beta-catenin/CTNNB1 or gamma-catenin/JUP; the complex is located to adherens junctions. The stable association of CTNNA1 is controversial as CTNNA1 was shown not to bind to F-actin when assembled in the complex. Alternatively, the CTNNA1-containing complex may be linked to F-actin by other proteins such as LIMA1. Binds AFDN and F-actin. Interacts with ARHGAP21. Interacts with AJUBA. Interacts with LIMA1. Interacts with vinculin/VCL. Interacts with TJP2/ZO2 (via N-terminus). Interacts with TJP1/ZO1 (via N-terminus). In terms of processing, sumoylated. Post-translationally, phosphorylation seems to contribute to the strength of cell-cell adhesion rather than to the basic capacity for cell-cell adhesion.

The protein resides in the cytoplasm. It is found in the cytoskeleton. The protein localises to the cell junction. Its subcellular location is the adherens junction. It localises to the cell membrane. The protein resides in the nucleus. In terms of biological role, associates with the cytoplasmic domain of a variety of cadherins. The association of catenins to cadherins produces a complex which is linked to the actin filament network, and which seems to be of primary importance for cadherins cell-adhesion properties. Can associate with both E- and N-cadherins. Originally believed to be a stable component of E-cadherin/catenin adhesion complexes and to mediate the linkage of cadherins to the actin cytoskeleton at adherens junctions. In contrast, cortical actin was found to be much more dynamic than E-cadherin/catenin complexes and CTNNA1 was shown not to bind to F-actin when assembled in the complex suggesting a different linkage between actin and adherens junctions components. The homodimeric form may regulate actin filament assembly and inhibit actin branching by competing with the Arp2/3 complex for binding to actin filaments. Involved in the regulation of WWTR1/TAZ, YAP1 and TGFB1-dependent SMAD2 and SMAD3 nuclear accumulation. May play a crucial role in cell differentiation. This chain is Catenin alpha-1, found in Oryctolagus cuniculus (Rabbit).